We begin with the raw amino-acid sequence, 228 residues long: 2-phospho-L-lactate guanylyltransferase (228 aa).

The protein belongs to the CofC family. As to quaternary structure, homodimer.

It catalyses the reaction (2S)-2-phospholactate + GTP + H(+) = (2S)-lactyl-2-diphospho-5'-guanosine + diphosphate. It participates in cofactor biosynthesis; coenzyme F420 biosynthesis. In terms of biological role, guanylyltransferase that catalyzes the activation of (2S)-2-phospholactate (2-PL) as (2S)-lactyl-2-diphospho-5'-guanosine, via the condensation of 2-PL with GTP. It is involved in the biosynthesis of coenzyme F420, a hydride carrier cofactor. In Methanosphaera stadtmanae (strain ATCC 43021 / DSM 3091 / JCM 11832 / MCB-3), this protein is 2-phospho-L-lactate guanylyltransferase.